The primary structure comprises 367 residues: Queuine tRNA-ribosyltransferase (367 aa).

The Proton acceptor role is filled by aspartate 89. Substrate contacts are provided by residues aspartate 89–phenylalanine 93, aspartate 143, glutamine 187, and glycine 214. An RNA binding region spans residues glycine 245 to aspartate 251. Aspartate 264 (nucleophile) is an active-site residue. The segment at threonine 269–arginine 273 is RNA binding; important for wobble base 34 recognition. Zn(2+)-binding residues include cysteine 302, cysteine 304, cysteine 307, and histidine 333.

This sequence belongs to the queuine tRNA-ribosyltransferase family. Homodimer. Within each dimer, one monomer is responsible for RNA recognition and catalysis, while the other monomer binds to the replacement base PreQ1. It depends on Zn(2+) as a cofactor.

It carries out the reaction 7-aminomethyl-7-carbaguanine + guanosine(34) in tRNA = 7-aminomethyl-7-carbaguanosine(34) in tRNA + guanine. The protein operates within tRNA modification; tRNA-queuosine biosynthesis. Its function is as follows. Catalyzes the base-exchange of a guanine (G) residue with the queuine precursor 7-aminomethyl-7-deazaguanine (PreQ1) at position 34 (anticodon wobble position) in tRNAs with GU(N) anticodons (tRNA-Asp, -Asn, -His and -Tyr). Catalysis occurs through a double-displacement mechanism. The nucleophile active site attacks the C1' of nucleotide 34 to detach the guanine base from the RNA, forming a covalent enzyme-RNA intermediate. The proton acceptor active site deprotonates the incoming PreQ1, allowing a nucleophilic attack on the C1' of the ribose to form the product. After dissociation, two additional enzymatic reactions on the tRNA convert PreQ1 to queuine (Q), resulting in the hypermodified nucleoside queuosine (7-(((4,5-cis-dihydroxy-2-cyclopenten-1-yl)amino)methyl)-7-deazaguanosine). This Nitrosospira multiformis (strain ATCC 25196 / NCIMB 11849 / C 71) protein is Queuine tRNA-ribosyltransferase.